The following is a 100-amino-acid chain: Large ribosomal subunit protein bL21 (100 aa).

This sequence belongs to the bacterial ribosomal protein bL21 family. In terms of assembly, part of the 50S ribosomal subunit. Contacts protein L20.

This protein binds to 23S rRNA in the presence of protein L20. This Rhodospirillum rubrum (strain ATCC 11170 / ATH 1.1.1 / DSM 467 / LMG 4362 / NCIMB 8255 / S1) protein is Large ribosomal subunit protein bL21.